The primary structure comprises 209 residues: Protein Bel-1 (209 aa).

Disordered regions lie at residues 1–30 (MASKYPEEGPITEGVEEDFNSHSTSGLDLT), 123–143 (FLNSRKESGTPKTDPTRPATS), and 156–185 (CSRPTPSNSESVCNGLGQPSERGHTSGESG). Composition is skewed to polar residues over residues 21-30 (SHSTSGLDLT) and 132-143 (TPKTDPTRPATS).

Functionally, transcriptional transactivator that activates the viral internal promoter (IP), thereby enhancing its own expression. This transactivation is repressed by nuclear factor I. Also transactivates the long terminal repeat (LTR) promoter, thereby inducing structural gene expression, initiating the late phase of infection. It is therefore a key regulator of viral gene expression. It directly binds to and activates DNA target sites of viral promoters and those of distinct cellular genes. Required for viral replication. The sequence is that of Protein Bel-1 (bel1) from Felis catus (Cat).